The sequence spans 139 residues: Type II methyltransferase M.AquIB (139 aa).

One can recognise an SAM-dependent MTase C5-type domain in the interval 1–135; that stretch reads MDIKNVHIKN…KAVSEQLLDV (135 aa). Residues 38 to 58 are disordered; it reads KTFGSTYRRLDPNQPSPTVTR.

It belongs to the class I-like SAM-binding methyltransferase superfamily. C5-methyltransferase family. Heterodimer of an alpha and a beta subunit.

The enzyme catalyses a 2'-deoxycytidine in DNA + S-adenosyl-L-methionine = a 5-methyl-2'-deoxycytidine in DNA + S-adenosyl-L-homocysteine + H(+). In terms of biological role, a methylase, recognizes the double-stranded sequence 5'-CYCGRG-3', methylates C-1 on both strands, and protects the DNA from cleavage by the AquI endonuclease. In Picosynechococcus sp. (strain ATCC 27264 / PCC 7002 / PR-6) (Agmenellum quadruplicatum), this protein is Type II methyltransferase M.AquIB (aquIMB).